Consider the following 275-residue polypeptide: Diaminopimelate epimerase (275 aa).

Substrate contacts are provided by asparagine 12, glutamine 45, and asparagine 65. Residue cysteine 74 is the Proton donor of the active site. Substrate-binding positions include 75 to 76 (GN), asparagine 158, asparagine 191, and 209 to 210 (ER). The active-site Proton acceptor is cysteine 218. Position 219-220 (219-220 (GT)) interacts with substrate.

This sequence belongs to the diaminopimelate epimerase family. In terms of assembly, homodimer.

It localises to the cytoplasm. The enzyme catalyses (2S,6S)-2,6-diaminopimelate = meso-2,6-diaminopimelate. Its pathway is amino-acid biosynthesis; L-lysine biosynthesis via DAP pathway; DL-2,6-diaminopimelate from LL-2,6-diaminopimelate: step 1/1. In terms of biological role, catalyzes the stereoinversion of LL-2,6-diaminopimelate (L,L-DAP) to meso-diaminopimelate (meso-DAP), a precursor of L-lysine and an essential component of the bacterial peptidoglycan. This is Diaminopimelate epimerase from Shewanella denitrificans (strain OS217 / ATCC BAA-1090 / DSM 15013).